The following is a 505-amino-acid chain: ATP synthase subunit alpha (505 aa).

170-177 lines the ATP pocket; that stretch reads GDRQTGKT.

The protein belongs to the ATPase alpha/beta chains family. In terms of assembly, F-type ATPases have 2 components, CF(1) - the catalytic core - and CF(0) - the membrane proton channel. CF(1) has five subunits: alpha(3), beta(3), gamma(1), delta(1), epsilon(1). CF(0) has four main subunits: a(1), b(1), b'(1) and c(9-12).

The protein resides in the cellular thylakoid membrane. The catalysed reaction is ATP + H2O + 4 H(+)(in) = ADP + phosphate + 5 H(+)(out). Its function is as follows. Produces ATP from ADP in the presence of a proton gradient across the membrane. The alpha chain is a regulatory subunit. The sequence is that of ATP synthase subunit alpha from Prochlorococcus marinus (strain SARG / CCMP1375 / SS120).